The primary structure comprises 279 residues: Lipid phosphate phosphatase epsilon 1, chloroplastic (279 aa).

The transit peptide at 1-88 (MAASSSLLLL…SFINNSSEIR (88 aa)) directs the protein to the chloroplast. The next 5 helical transmembrane spans lie at 126–142 (LWAV…SVVL), 164–184 (SHAQ…MEWL), 185–205 (GTNG…SYFI), 219–239 (VVVG…MWNS), and 255–275 (VFLF…LNWF).

The protein belongs to the PA-phosphatase related phosphoesterase family. In terms of tissue distribution, expressed in root tips, root branch points, cotyledons and leaves.

The protein localises to the plastid. Its subcellular location is the chloroplast inner membrane. Inhibited by Mg(2+). Its function is as follows. Exhibits phosphatidate phosphatase (PAP) activity in vitro. May play a secondary role as PAP in plastids. This is Lipid phosphate phosphatase epsilon 1, chloroplastic (LPPE1) from Arabidopsis thaliana (Mouse-ear cress).